Reading from the N-terminus, the 147-residue chain is Large ribosomal subunit protein uL15 (147 aa).

The segment at 1–47 (MKLHELKPAEGAVRAKRRLGRGTATGQGKTAGRGQKGQWSRSGGGVR) is disordered. A compositionally biased stretch (gly residues) spans 23 to 35 (TATGQGKTAGRGQ).

It belongs to the universal ribosomal protein uL15 family. As to quaternary structure, part of the 50S ribosomal subunit.

Its function is as follows. Binds to the 23S rRNA. The sequence is that of Large ribosomal subunit protein uL15 from Clostridioides difficile (strain 630) (Peptoclostridium difficile).